Here is a 260-residue protein sequence, read N- to C-terminus: Carbonic anhydrase 2 (260 aa).

Ser2 carries the N-acetylserine modification. Ser2 bears the Phosphoserine mark. Residues 3-259 form the Alpha-carbonic anhydrase domain; it reads HHWGYSKSNG…LKNRKIKASF (257 aa). Residues 16 to 39 form a disordered region; the sequence is WHKEFPIANGDRQSPVDIDTGTAQ. Residue His64 is the Proton donor/acceptor of the active site. Ser87 carries the post-translational modification Phosphoserine. Positions 94, 96, and 119 each coordinate Zn(2+). Position 165 is a phosphoserine (Ser165). A substrate-binding site is contributed by 198 to 199; it reads TT. The residue at position 232 (Ser232) is a Phosphoserine.

Belongs to the alpha-carbonic anhydrase family. As to quaternary structure, interacts with SLC4A4 and SLC26A6. Interaction with SLC4A7 regulates SLC4A7 transporter activity. The cofactor is Zn(2+).

Its subcellular location is the cytoplasm. It is found in the cell membrane. The catalysed reaction is hydrogencarbonate + H(+) = CO2 + H2O. The enzyme catalyses urea = cyanamide + H2O. Its activity is regulated as follows. Inhibited by acetazolamide. Functionally, catalyzes the reversible hydration of carbon dioxide. Can also hydrate cyanamide to urea. Involved in the regulation of fluid secretion into the anterior chamber of the eye. Essential for bone resorption and osteoclast differentiation. Contributes to intracellular pH regulation in the duodenal upper villous epithelium during proton-coupled peptide absorption. Stimulates the chloride-bicarbonate exchange activity of SLC26A6. The polypeptide is Carbonic anhydrase 2 (Ca2) (Rattus norvegicus (Rat)).